The primary structure comprises 491 residues: Protein nucleotidyltransferase YdiU (491 aa).

ATP is bound by residues Gly94, Gly96, Arg97, Lys117, Asp129, Gly130, Arg180, and Arg187. The active-site Proton acceptor is Asp256. 2 residues coordinate Mg(2+): Asn257 and Asp266. Residue Asp266 participates in ATP binding.

It belongs to the SELO family. The cofactor is Mg(2+). Mn(2+) is required as a cofactor.

It catalyses the reaction L-seryl-[protein] + ATP = 3-O-(5'-adenylyl)-L-seryl-[protein] + diphosphate. The catalysed reaction is L-threonyl-[protein] + ATP = 3-O-(5'-adenylyl)-L-threonyl-[protein] + diphosphate. It carries out the reaction L-tyrosyl-[protein] + ATP = O-(5'-adenylyl)-L-tyrosyl-[protein] + diphosphate. The enzyme catalyses L-histidyl-[protein] + UTP = N(tele)-(5'-uridylyl)-L-histidyl-[protein] + diphosphate. It catalyses the reaction L-seryl-[protein] + UTP = O-(5'-uridylyl)-L-seryl-[protein] + diphosphate. The catalysed reaction is L-tyrosyl-[protein] + UTP = O-(5'-uridylyl)-L-tyrosyl-[protein] + diphosphate. Its function is as follows. Nucleotidyltransferase involved in the post-translational modification of proteins. It can catalyze the addition of adenosine monophosphate (AMP) or uridine monophosphate (UMP) to a protein, resulting in modifications known as AMPylation and UMPylation. This is Protein nucleotidyltransferase YdiU from Clostridium botulinum (strain Okra / Type B1).